The primary structure comprises 286 residues: tRNA (guanine-N(7)-)-methyltransferase (286 aa).

Residues Glu91, Glu116, Asn143, and Asp165 each coordinate S-adenosyl-L-methionine. Residue Asp165 is part of the active site. Substrate contacts are provided by residues Lys169, Asp201, and 262 to 265 (TNFE).

It belongs to the class I-like SAM-binding methyltransferase superfamily. TrmB family.

It catalyses the reaction guanosine(46) in tRNA + S-adenosyl-L-methionine = N(7)-methylguanosine(46) in tRNA + S-adenosyl-L-homocysteine. It participates in tRNA modification; N(7)-methylguanine-tRNA biosynthesis. Catalyzes the formation of N(7)-methylguanine at position 46 (m7G46) in tRNA. In Bifidobacterium longum subsp. infantis (strain ATCC 15697 / DSM 20088 / JCM 1222 / NCTC 11817 / S12), this protein is tRNA (guanine-N(7)-)-methyltransferase.